The primary structure comprises 1989 residues: Zinc finger C3H1 domain-containing protein (1989 aa).

4 disordered regions span residues 1–133 (MATA…RPSF), 148–218 (GRPY…SKNE), 251–290 (SSKE…PEEK), and 310–365 (LPGD…LGED). Ala2 bears the N-acetylalanine mark. Phosphoserine is present on residues Ser15, Ser28, and Ser34. Acidic residues predominate over residues 20 to 32 (GELEDGEISDDDN). The span at 33 to 44 (NSQIRSRSSSSS) shows a compositional bias: low complexity. Gly residues predominate over residues 62–72 (RGGGSGGGGGS). Low complexity-rich tracts occupy residues 114-132 (PPSV…PRPS), 183-192 (GFSSSQSWRE), and 201-210 (KSFGRSPSRK). Ser128 carries the phosphoserine modification. The stretch at 219 to 259 (NCVEETFEDLLLKYKQIQLELECINKDEKLALSSKEENVQE) forms a coiled coil. A Phosphoserine modification is found at Ser251. Over residues 251-262 (SSKEENVQEDPK) the composition is skewed to basic and acidic residues. Polar residues predominate over residues 266 to 279 (FEDQTSTDNVSITK). Over residues 280-290 (DSSKEVAPEEK) the composition is skewed to basic and acidic residues. Residues 330–340 (KSDTTDSSQGL) show a composition bias toward polar residues. Phosphoserine occurs at positions 352 and 383. A coiled-coil region spans residues 358–389 (SEKKLGEDEEELSELQLRLLALQSASKKWQQK). 2 disordered regions span residues 385-671 (KWQQ…SNLS) and 711-770 (LNDS…PEAL). Over residues 392 to 402 (QVMKESKEKLT) the composition is skewed to basic and acidic residues. The span at 430 to 440 (ALRKQQTKAWK) shows a compositional bias: basic residues. Residues 432–487 (RKQQTKAWKKLQQQKEQERQKEEDQRKQAEEEERRKREEEIRKIRDLSNQEEQYNR) are a coiled coil. Basic and acidic residues-rich tracts occupy residues 444-479 (QQKE…RDLS) and 501-515 (KSSD…DKQP). Acidic residues predominate over residues 527–537 (NYEEVAMDTDS). The span at 574–583 (VSSLPPLSQP) shows a compositional bias: low complexity. A compositionally biased stretch (pro residues) spans 594 to 616 (PLPPLPPLPPLPPEDPEQPPKPP). The span at 647-671 (TSSNSDPPSPPVLNNSHPVPRSNLS) shows a compositional bias: polar residues. A phosphoserine mark is found at Ser662, Ser714, Ser717, and Ser719. Positions 755–770 (PKSEKENDPLRTPEAL) are enriched in basic and acidic residues. Thr766 is modified (phosphothreonine). A phosphoserine mark is found at Ser805 and Ser809. Residues 847-909 (LKNLVQQEAK…QQRVTIKKAL (63 aa)) are a coiled coil. A phosphoserine mark is found at Ser948, Ser949, and Ser953. Residues 965–989 (EKRRLQKLEYEYALKIQKLKEARAL) adopt a coiled-coil conformation. Phosphoserine occurs at positions 998 and 1046. The C3H1-type zinc finger occupies 1185-1206 (FCRFDLTGTCNDDDCQWQHIQD). Phosphoserine is present on residues Ser1301, Ser1303, and Ser1304. 7 TPR repeats span residues 1361 to 1400 (VQLW…NKDN), 1401 to 1434 (PEIW…APDY), 1438 to 1471 (WTFL…ETSN), 1478 to 1511 (LEAL…ANDG), 1602 to 1635 (LPLY…CPIN), 1636 to 1669 (CQLL…NPQN), and 1745 to 1778 (PYLW…AMRC).

Component of the poly(A) tail exosome targeting (PAXT) complex made of accessory factors, such as PABPN1, ZFC3H1 and MTREX, and which directs a subset of long and polyadenylated poly(A) RNAs for exosomal degradation. Co-localizes with component of the CBC-ARS2 (CBCA) complex. Binds to RNA exosome components. Interacts with NCBP1/CBP80, ZC3H18, MTREX and PABPN1 in a RNase-insensitive manner, and with PABPC4, PABPC1 and ZC3H14 in a RNase-sensitive manner.

The protein resides in the nucleus. Functionally, subunit of the trimeric poly(A) tail exosome targeting (PAXT) complex, a complex that directs a subset of long and polyadenylated poly(A) RNAs for exosomal degradation. The RNA exosome is fundamental for the degradation of RNA in eukaryotic nuclei. Substrate targeting is facilitated by its cofactor MTREX, which links to RNA-binding protein adapters. The chain is Zinc finger C3H1 domain-containing protein (ZFC3H1) from Homo sapiens (Human).